The chain runs to 416 residues: MNTPFFISWRYQRGKQKNPLVALIAKFSAIGIALGVAVLIVGLSAMNGFERELNQRILAVVPHAEILSAPNATEPTIHHWQNLEKRLQQNPQIKGISPFVSFTALVENGSKLKVVQVKGVEKQAEDKVSSIGNFVQEQGWNKFEKEGGLVLGSGIAKELDVKVGDWITLLISQQNGDEQFAQPTREPVQVTSILRLDGQLDYSYALLPLAQAQTFLTYQPDQITGVELKLDDPFSARNLDLSMLNDYPQMLYMQNWISKFGYMYRDIQLIRTVMYIAMVLVIGVACFNIVSTLIMAVKDKQGDIAIMRTLGANNAFIKRIFIWYGLQAGMKGCLIGIVLGIILALNLTTFIQGIEWVIGKKLLSGDVYFVDFLPSELHWLDVLMVLVAALALSLMASLYPASRAAKLQPAQVLSSH.

Helical transmembrane passes span 21 to 41, 276 to 296, 334 to 354, and 379 to 399; these read VALIAKFSAIGIALGVAVLIV, IAMVLVIGVACFNIVSTLIMA, LIGIVLGIILALNLTTFIQGI, and WLDVLMVLVAALALSLMASLY.

This sequence belongs to the ABC-4 integral membrane protein family. LolC/E subfamily.

Its subcellular location is the cell inner membrane. Its function is as follows. Part of an ATP-dependent transport system LolCDE responsible for the release of lipoproteins targeted to the outer membrane from the inner membrane. Such a release is dependent of the sorting-signal (absence of an Asp at position 2 of the mature lipoprotein) and of LolA. This is Lipoprotein-releasing system transmembrane protein LolE (lolE) from Haemophilus influenzae (strain ATCC 51907 / DSM 11121 / KW20 / Rd).